Here is a 2260-residue protein sequence, read N- to C-terminus: Protein Ycf2 (2260 aa).

Residue G1614–S1621 coordinates ATP.

The protein belongs to the Ycf2 family.

It is found in the plastid. The protein resides in the chloroplast stroma. Functionally, probable ATPase of unknown function. Its presence in a non-photosynthetic plant (Epifagus virginiana) and experiments in tobacco indicate that it has an essential function which is probably not related to photosynthesis. The chain is Protein Ycf2 from Dioscorea elephantipes (Elephant's foot yam).